We begin with the raw amino-acid sequence, 23 residues long: Paralytic peptide 1 (23 aa).

Cysteine 7 and cysteine 19 form a disulfide bridge.

Belongs to the GBP/PSP1/paralytic peptide family. In terms of tissue distribution, hemolymph.

In terms of biological role, causes rapid, rigid paralysis when injected into Lepidopteran larvae. The physiological role may be to reduce hemolymph loss following injury and promote wound healing. In Manduca sexta (Tobacco hawkmoth), this protein is Paralytic peptide 1.